Consider the following 184-residue polypeptide: Ribosome maturation factor RimM (184 aa).

One can recognise a PRC barrel domain in the interval 106–184; it reads PGDYYWYQLE…RMIVDWDPEF (79 aa).

It belongs to the RimM family. In terms of assembly, binds ribosomal protein uS19.

It is found in the cytoplasm. An accessory protein needed during the final step in the assembly of 30S ribosomal subunit, possibly for assembly of the head region. Essential for efficient processing of 16S rRNA. May be needed both before and after RbfA during the maturation of 16S rRNA. It has affinity for free ribosomal 30S subunits but not for 70S ribosomes. The chain is Ribosome maturation factor RimM from Chromohalobacter salexigens (strain ATCC BAA-138 / DSM 3043 / CIP 106854 / NCIMB 13768 / 1H11).